Consider the following 249-residue polypeptide: Ubiquinone/menaquinone biosynthesis C-methyltransferase UbiE (249 aa).

S-adenosyl-L-methionine is bound by residues Thr74, Asp93, and 121 to 122 (DA).

This sequence belongs to the class I-like SAM-binding methyltransferase superfamily. MenG/UbiE family.

It catalyses the reaction a 2-demethylmenaquinol + S-adenosyl-L-methionine = a menaquinol + S-adenosyl-L-homocysteine + H(+). The catalysed reaction is a 2-methoxy-6-(all-trans-polyprenyl)benzene-1,4-diol + S-adenosyl-L-methionine = a 5-methoxy-2-methyl-3-(all-trans-polyprenyl)benzene-1,4-diol + S-adenosyl-L-homocysteine + H(+). Its pathway is quinol/quinone metabolism; menaquinone biosynthesis; menaquinol from 1,4-dihydroxy-2-naphthoate: step 2/2. The protein operates within cofactor biosynthesis; ubiquinone biosynthesis. Its function is as follows. Methyltransferase required for the conversion of demethylmenaquinol (DMKH2) to menaquinol (MKH2) and the conversion of 2-polyprenyl-6-methoxy-1,4-benzoquinol (DDMQH2) to 2-polyprenyl-3-methyl-6-methoxy-1,4-benzoquinol (DMQH2). This is Ubiquinone/menaquinone biosynthesis C-methyltransferase UbiE from Acidiphilium cryptum (strain JF-5).